A 752-amino-acid chain; its full sequence is Photosystem I P700 chlorophyll a apoprotein A1 (752 aa).

8 helical membrane-spanning segments follow: residues 73 to 96 (IFSAHFGQLSLIFIWLSGMYFHGA), 159 to 182 (LYVTALGGLFMAGLMAFGGWFHYH), 198 to 222 (LNHHLAGLLGLGSLSWAGHQIHVSL), 294 to 312 (IAHHHLAISVLFIVAGHMY), 349 to 372 (WHANLAINLALFGSLSIIVAHHMY), 388 to 414 (LSLFTHHTWIGGFCIVGASAHGAIFMI), 436 to 458 (ALISHLNWVCIFLGTHSFGLYIH), and 533 to 551 (FMVHHIHAFTIHVTLLILL). The [4Fe-4S] cluster site is built by C575 and C584. The next 2 membrane-spanning stretches (helical) occupy residues 591 to 612 (HVFLGLFWMYNCISVVIFHFSW) and 666 to 688 (ISAYGLMFLAAHFIWAFSLMFLF). Position 677 (H677) interacts with chlorophyll a'. Chlorophyll a is bound by residues M685 and Y693. Position 694 (W694) interacts with phylloquinone. Residues 726–746 (AVGAAHYLLGGIATTWAFFLS) form a helical membrane-spanning segment.

Belongs to the PsaA/PsaB family. The PsaA/B heterodimer binds the P700 chlorophyll special pair and subsequent electron acceptors. PSI consists of a core antenna complex that captures photons, and an electron transfer chain that converts photonic excitation into a charge separation. The eukaryotic PSI reaction center is composed of at least 11 subunits. P700 is a chlorophyll a/chlorophyll a' dimer, A0 is one or more chlorophyll a, A1 is one or both phylloquinones and FX is a shared 4Fe-4S iron-sulfur center. serves as cofactor.

The protein localises to the plastid. Its subcellular location is the chloroplast thylakoid membrane. It carries out the reaction reduced [plastocyanin] + hnu + oxidized [2Fe-2S]-[ferredoxin] = oxidized [plastocyanin] + reduced [2Fe-2S]-[ferredoxin]. Its function is as follows. PsaA and PsaB bind P700, the primary electron donor of photosystem I (PSI), as well as the electron acceptors A0, A1 and FX. PSI is a plastocyanin/cytochrome c6-ferredoxin oxidoreductase, converting photonic excitation into a charge separation, which transfers an electron from the donor P700 chlorophyll pair to the spectroscopically characterized acceptors A0, A1, FX, FA and FB in turn. Oxidized P700 is reduced on the lumenal side of the thylakoid membrane by plastocyanin or cytochrome c6. The protein is Photosystem I P700 chlorophyll a apoprotein A1 of Cyanidium caldarium (Red alga).